The primary structure comprises 85 residues: Small ribosomal subunit protein bS16c (85 aa).

This sequence belongs to the bacterial ribosomal protein bS16 family.

It localises to the plastid. Its subcellular location is the chloroplast. This chain is Small ribosomal subunit protein bS16c, found in Nicotiana tabacum (Common tobacco).